We begin with the raw amino-acid sequence, 457 residues long: Glutamate--tRNA ligase 2 (457 aa).

Positions 9–19 (PSPTGYIHIGN) match the 'HIGH' region motif. The 'KMSKS' region signature appears at 250 to 254 (GLSKR). Lys253 is a binding site for ATP.

Belongs to the class-I aminoacyl-tRNA synthetase family. Glutamate--tRNA ligase type 1 subfamily. Monomer.

It localises to the cytoplasm. It carries out the reaction tRNA(Glu) + L-glutamate + ATP = L-glutamyl-tRNA(Glu) + AMP + diphosphate. Catalyzes the attachment of glutamate to tRNA(Glu) in a two-step reaction: glutamate is first activated by ATP to form Glu-AMP and then transferred to the acceptor end of tRNA(Glu). The chain is Glutamate--tRNA ligase 2 from Brucella melitensis biotype 1 (strain ATCC 23456 / CCUG 17765 / NCTC 10094 / 16M).